Here is a 312-residue protein sequence, read N- to C-terminus: Fibrinogen-like protein 1 (312 aa).

A signal peptide spans 1 to 22 (MAKMFSFILVTTALVMGRGSSA). Positions 39–60 (LLETRVKQQQVKISQLLHEKQV) form a coiled coil. Positions 74-306 (LGGKRQYADC…SVVMKIRPND (233 aa)) constitute a Fibrinogen C-terminal domain. Disulfide bonds link Cys-83–Cys-112 and Cys-248–Cys-261.

As to quaternary structure, homodimer. Interacts (via the Fibrinogen C-terminal domain) with LAG3 (via Ig-like domains 1 and 2).

Its subcellular location is the secreted. Immune suppressive molecule that inhibits antigen-specific T-cell activation by acting as a major ligand of LAG3. Responsible for LAG3 T-cell inhibitory function. Binds LAG3 independently from MHC class II (MHC-II). Secreted by, and promotes growth of, hepatocytes. The chain is Fibrinogen-like protein 1 (FGL1) from Bos taurus (Bovine).